A 198-amino-acid polypeptide reads, in one-letter code: Pyridoxal 5'-phosphate synthase subunit PdxT (198 aa).

49–51 provides a ligand contact to L-glutamine; that stretch reads GES. C81 (nucleophile) is an active-site residue. Residues R113 and 141-142 each bind L-glutamine; that span reads IR. Catalysis depends on charge relay system residues H177 and E179.

Belongs to the glutaminase PdxT/SNO family. In terms of assembly, in the presence of PdxS, forms a dodecamer of heterodimers. Only shows activity in the heterodimer.

The enzyme catalyses aldehydo-D-ribose 5-phosphate + D-glyceraldehyde 3-phosphate + L-glutamine = pyridoxal 5'-phosphate + L-glutamate + phosphate + 3 H2O + H(+). It catalyses the reaction L-glutamine + H2O = L-glutamate + NH4(+). It participates in cofactor biosynthesis; pyridoxal 5'-phosphate biosynthesis. Functionally, catalyzes the hydrolysis of glutamine to glutamate and ammonia as part of the biosynthesis of pyridoxal 5'-phosphate. The resulting ammonia molecule is channeled to the active site of PdxS. This Mycobacterium tuberculosis (strain ATCC 25177 / H37Ra) protein is Pyridoxal 5'-phosphate synthase subunit PdxT.